The primary structure comprises 554 residues: MPSVDDVLEQVGEFGWFQKQAFLNLCLTSVAFAPIYVGIVFLGFTPDHRCRSPGVAELSQRCGWSLAEELNYTVPGLGPAGQAFPRQCRRYEVDWNQSTLGCEDPLAGLAANSSHLPLGPCQYGWVYDTPGSSIVTEFNLVCEAAWKVDLFQSCVNVGFFVGSMGIGYIADRLVGSSASWPPPHQCRLGRPDAVAPDYVSLLVFRLLQGLVSKGSWMAGYTLITEFVGLGYRKTVAILYQTAFSVGLVLLSGLAYAVPHWRSLQLAVSLPIFLLLLCYWFVPESPRWLLSQKRNTQAIKIMDRIAQKNGKLPPADLKMLSLEEEVVTERLSPSFLDLFRTQNLRKYTFILMYLWFTSSVLYQGLIMHVGATGGSLYLDFLYSALVEFPAAFVILLIIDRFGRLYLLAGSNLLAGAACFFMIFISHDLHWLSIVAACIGRMGITIVFQMVCLVSAELYPTFIRNLGVMVCSSLCDLGGVVAPFLVFRLTEVWRGLPLVLFAALGLVAGGMSLLLPETKGVALPETIEEVERLGRKAKPRDNMIYLQVKMPEPAGL.

The Cytoplasmic segment spans residues 1–24 (MPSVDDVLEQVGEFGWFQKQAFLN). A helical transmembrane segment spans residues 25 to 45 (LCLTSVAFAPIYVGIVFLGFT). Residues 46–234 (PDHRCRSPGV…EFVGLGYRKT (189 aa)) are Extracellular-facing. Residue asparagine 71 is glycosylated (N-linked (GlcNAc...) asparagine). Residues 235 to 255 (VAILYQTAFSVGLVLLSGLAY) form a helical membrane-spanning segment. Topologically, residues 256–261 (AVPHWR) are cytoplasmic. The chain crosses the membrane as a helical span at residues 262-282 (SLQLAVSLPIFLLLLCYWFVP). Positions 282 to 286 (PESPR) match the Proline-rich sequence motif. The Extracellular portion of the chain corresponds to 283–347 (ESPRWLLSQK…FRTQNLRKYT (65 aa)). A Phosphoserine modification is found at serine 333. The helical transmembrane segment at 348 to 368 (FILMYLWFTSSVLYQGLIMHV) threads the bilayer. Residues 369-376 (GATGGSLY) lie on the Cytoplasmic side of the membrane. A helical transmembrane segment spans residues 377–397 (LDFLYSALVEFPAAFVILLII). The Extracellular portion of the chain corresponds to 398 to 402 (DRFGR). Residues 403 to 423 (LYLLAGSNLLAGAACFFMIFI) traverse the membrane as a helical segment. At 424-431 (SHDLHWLS) the chain is on the cytoplasmic side. Residues 432–452 (IVAACIGRMGITIVFQMVCLV) traverse the membrane as a helical segment. Topologically, residues 453–464 (SAELYPTFIRNL) are extracellular. Residues 465–485 (GVMVCSSLCDLGGVVAPFLVF) traverse the membrane as a helical segment. The Cytoplasmic segment spans residues 486–492 (RLTEVWR). The chain crosses the membrane as a helical span at residues 493–513 (GLPLVLFAALGLVAGGMSLLL). Residues 514–554 (PETKGVALPETIEEVERLGRKAKPRDNMIYLQVKMPEPAGL) are Extracellular-facing.

The protein belongs to the major facilitator (TC 2.A.1) superfamily. Organic cation transporter (TC 2.A.1.19) family. Phosphorylated.

The protein localises to the basolateral cell membrane. It is found in the apical cell membrane. The protein resides in the lateral cell membrane. Its subcellular location is the basal cell membrane. It localises to the cell membrane. The enzyme catalyses 1-methylnicotinamide(out) = 1-methylnicotinamide(in). It carries out the reaction dopamine(out) = dopamine(in). It catalyses the reaction serotonin(out) = serotonin(in). The catalysed reaction is (R)-adrenaline(out) = (R)-adrenaline(in). The enzyme catalyses (R)-noradrenaline(out) = (R)-noradrenaline(in). It carries out the reaction histamine(out) = histamine(in). It catalyses the reaction guanidine(out) = guanidine(in). The catalysed reaction is choline(out) = choline(in). The enzyme catalyses acetylcholine(in) = acetylcholine(out). It carries out the reaction thiamine(in) = thiamine(out). It catalyses the reaction spermidine(in) = spermidine(out). The catalysed reaction is agmatine(out) = agmatine(in). The enzyme catalyses putrescine(out) = putrescine(in). It carries out the reaction (R)-carnitine(in) = (R)-carnitine(out). It catalyses the reaction O-isobutanoyl-(R)-carnitine(in) = O-isobutanoyl-(R)-carnitine(out). The catalysed reaction is O-acetyl-(R)-carnitine(in) = O-acetyl-(R)-carnitine(out). The enzyme catalyses O-3-hydroxybutanoyl-(R)-carnitine(in) = O-3-hydroxybutanoyl-(R)-carnitine(out). It carries out the reaction O-propanoyl-(R)-carnitine(in) = O-propanoyl-(R)-carnitine(out). It catalyses the reaction O-butanoyl-(R)-carnitine(in) = O-butanoyl-(R)-carnitine(out). The catalysed reaction is O-2-methylbutanoyl-(R)-carnitine(in) = O-2-methylbutanoyl-(R)-carnitine(out). The enzyme catalyses O-3-methylbutanoyl-(R)-carnitine(in) = O-3-methylbutanoyl-(R)-carnitine(out). It carries out the reaction O-hexanoyl-(R)-carnitine(in) = O-hexanoyl-(R)-carnitine(out). It catalyses the reaction L-histidyl-L-proline diketopiperazine(in) = L-histidyl-L-proline diketopiperazine(out). The catalysed reaction is (R)-salsolinol(in) = (R)-salsolinol(out). The enzyme catalyses prostaglandin F2alpha(out) = prostaglandin F2alpha(in). It carries out the reaction prostaglandin E2(out) = prostaglandin E2(in). With respect to regulation, phosphorylation of the transporter leads to changes in its substrate affinity, resulting in a regulation of the transport activity. In contrast with rat ortholog, ASP uptake is inhibited by protein kinase A (PKA) and C (PKC) activation. ASP uptake is also endogenously activated by calmodulin, the calmodulin-dependent kinase II and LCK tyrosine kinase. Inhibited by cGMP, most likely through a cGMP-binding protein that interacts with OCT1. Electrogenic voltage-dependent transporter that mediates the transport of a variety of organic cations such as endogenous bioactive amines, cationic drugs and xenobiotics. Functions as a pH- and Na(+)-independent, bidirectional transporter. Cation cellular uptake or release is driven by the electrochemical potential (i.e. membrane potential and concentration gradient) and substrate selectivity. Hydrophobicity is a major requirement for recognition in polyvalent substrates and inhibitors. Primarily expressed in the basolateral membrane of hepatocytes and proximal tubules and involved in the uptake and disposition of cationic compounds from the blood by hepatic and renal clearance. Most likely functions as an uptake carrier in enterocytes contributing to the intestinal elimination of organic cations from the systemic circulation. Transports endogenous monoamines such as N-1-methylnicotinamide (NMN), guanidine, neurotransmitters dopamine, serotonin, noradrenaline, adrenaline and histamine, and quaternary ammonium compound such as choline. Also transports natural polyamines such as spermidine, agmatine and putrescine at low affinity, but relatively high turnover. Involved in the hepatic and intestinal uptake of the vitamin B1/thiamine, hence regulating hepatic lipid and energy metabolism. Contributes to the influx and efflux of fatty acid carriers carnitines and acylcarnitines across the basolateral membrane of hepatocytes, from the liver to the systemic circulation and inversely and may be involved in regulating the systemic availability of hepatic acylcarnitines. Also capable of transporting non-amine endogenous compounds such as prostaglandin E2 (PGE2) and prostaglandin F2-alpha (PGF2-alpha). May contribute to the transport of cationic compounds in testes across the blood-testis-barrier. Also mediates the uptake of xenobiotics tributylmethylammonium (TBuMA), quinidine, N-methyl-quinine (NMQ), N-methyl-quinidine (NMQD) N-(4,4-azo-n-pentyl)-quinuclidine (APQ), azidoprocainamide methoiodide (AMP), N-(4,4-azo-n-pentyl)-21-deoxyajmalinium (APDA) and 4-(4-(dimethylamino)styryl)-N-methylpyridinium (ASP). This chain is Solute carrier family 22 member 1 (SLC22A1), found in Sus scrofa (Pig).